The following is a 535-amino-acid chain: 5,6-dihydroxyindole-2-carboxylic acid oxidase (535 aa).

The signal sequence occupies residues 1–23; sequence MQLPMLLLVSLPLLLNMFKPAEA. At 24 to 478 the chain is on the lumenal, melanosome side; sequence QFPRQCATIE…GPLRVTEMIT (455 aa). 5 cysteine pairs are disulfide-bonded: cysteine 29–cysteine 40, cysteine 41–cysteine 64, cysteine 55–cysteine 98, cysteine 100–cysteine 109, and cysteine 112–cysteine 121. Asparagine 95 and asparagine 103 each carry an N-linked (GlcNAc...) asparagine glycan. N-linked (GlcNAc...) asparagine glycosylation is present at asparagine 180. 3 residues coordinate Zn(2+): histidine 191, histidine 214, and histidine 223. 2 disulfides stabilise this stretch: cysteine 257–cysteine 260 and cysteine 289–cysteine 302. N-linked (GlcNAc...) asparagine glycans are attached at residues asparagine 303 and asparagine 349. Zn(2+) contacts are provided by histidine 376 and histidine 380. N-linked (GlcNAc...) asparagine glycosylation is present at asparagine 384. Histidine 403 serves as a coordination point for Zn(2+). The chain crosses the membrane as a helical span at residues 479–499; the sequence is IAIVTALVLVAIIFAAAACIV. The Cytoplasmic segment spans residues 500–535; it reads RAKKNRDELHQPLLTDQYQHYSDDYDGIATPSQSVV.

Belongs to the tyrosinase family. As to quaternary structure, tyrosinase, TYRP1 and TYRP2 may form a multienzyme complex. It depends on Cu(2+) as a cofactor. Requires Zn(2+) as cofactor.

It is found in the melanosome membrane. The enzyme catalyses 2 5,6-dihydroxyindole-2-carboxylate + O2 = 2 indole-5,6-quinone-2-carboxylate + 2 H2O. Its pathway is pigment biosynthesis; melanin biosynthesis. Functionally, plays a role in melanin biosynthesis. Catalyzes the oxidation of 5,6-dihydroxyindole-2-carboxylic acid (DHICA) into indole-5,6-quinone-2-carboxylic acid. May regulate or influence the type of melanin synthesized. Also to a lower extent, capable of hydroxylating tyrosine and producing melanin. This Gallus gallus (Chicken) protein is 5,6-dihydroxyindole-2-carboxylic acid oxidase (TYRP1).